Consider the following 319-residue polypeptide: uncharacterized protein (319 aa).

This is an uncharacterized protein from Ictalurid herpesvirus 1 (strain Auburn) (IcHV-1).